The following is a 65-amino-acid chain: Large ribosomal subunit protein bL35 (65 aa).

The segment at 1–30 (MPKMKTVSGAAKRFKKTGSGRFKSKQSHLR) is disordered. Over residues 12–30 (KRFKKTGSGRFKSKQSHLR) the composition is skewed to basic residues.

This sequence belongs to the bacterial ribosomal protein bL35 family.

This is Large ribosomal subunit protein bL35 from Alteromonas mediterranea (strain DSM 17117 / CIP 110805 / LMG 28347 / Deep ecotype).